A 231-amino-acid chain; its full sequence is Uracil-DNA glycosylase (231 aa).

The active-site Proton acceptor is the aspartate 71.

The protein belongs to the uracil-DNA glycosylase (UDG) superfamily. UNG family.

It is found in the cytoplasm. It catalyses the reaction Hydrolyzes single-stranded DNA or mismatched double-stranded DNA and polynucleotides, releasing free uracil.. Its function is as follows. Excises uracil residues from the DNA which can arise as a result of misincorporation of dUMP residues by DNA polymerase or due to deamination of cytosine. This Pseudomonas aeruginosa (strain ATCC 15692 / DSM 22644 / CIP 104116 / JCM 14847 / LMG 12228 / 1C / PRS 101 / PAO1) protein is Uracil-DNA glycosylase.